Consider the following 282-residue polypeptide: 2-dehydro-3-deoxyphosphooctonate aldolase (282 aa).

This sequence belongs to the KdsA family.

It is found in the cytoplasm. The catalysed reaction is D-arabinose 5-phosphate + phosphoenolpyruvate + H2O = 3-deoxy-alpha-D-manno-2-octulosonate-8-phosphate + phosphate. It functions in the pathway carbohydrate biosynthesis; 3-deoxy-D-manno-octulosonate biosynthesis; 3-deoxy-D-manno-octulosonate from D-ribulose 5-phosphate: step 2/3. Its pathway is bacterial outer membrane biogenesis; lipopolysaccharide biosynthesis. The polypeptide is 2-dehydro-3-deoxyphosphooctonate aldolase (Shewanella pealeana (strain ATCC 700345 / ANG-SQ1)).